The sequence spans 107 residues: Circadian clock oscillator protein KaiB (107 aa).

Belongs to the KaiB family. In terms of assembly, may undergo a major conformational rearrangment; in the free state forms homooligomers. When bound to KaiC switches to a monomeric thioredoxin-fold (KaiB(fs)). The active oscillator complex is probably KaiC(6):KaiB(6).

Its function is as follows. Component of the KaiBC clock protein complex, which constitutes the main circadian regulator in cyanobacteria; it may modify the ATPase activity of KaiC. Does not stimulate dephosphorylation of endogenous KaiC, although it does stimulate dephosphorylation of KiaC from S.elongatus strain PCC 7942. Reduces the ATPase activity of KaiC by about half in vitro, which may be its function in vivo. In terms of biological role, may be a metamorphic protein which reversibly switches between an inactive tetrameric fold and a rare, thioredoxin-like monomeric fold (KaiB(fs)). KaiB(fs) binds phospho-KaiC, and perhaps clock output effectors. The chain is Circadian clock oscillator protein KaiB from Prochlorococcus marinus subsp. pastoris (strain CCMP1986 / NIES-2087 / MED4).